The primary structure comprises 431 residues: Enolase (431 aa).

Residue Gln163 coordinates (2R)-2-phosphoglycerate. Glu205 serves as the catalytic Proton donor. Residues Asp242, Glu288, and Asp315 each contribute to the Mg(2+) site. Positions 340, 369, 370, and 391 each coordinate (2R)-2-phosphoglycerate. Lys340 (proton acceptor) is an active-site residue.

The protein belongs to the enolase family. Mg(2+) serves as cofactor.

The protein localises to the cytoplasm. The protein resides in the secreted. It is found in the cell surface. The catalysed reaction is (2R)-2-phosphoglycerate = phosphoenolpyruvate + H2O. It functions in the pathway carbohydrate degradation; glycolysis; pyruvate from D-glyceraldehyde 3-phosphate: step 4/5. Functionally, catalyzes the reversible conversion of 2-phosphoglycerate (2-PG) into phosphoenolpyruvate (PEP). It is essential for the degradation of carbohydrates via glycolysis. The protein is Enolase of Bacillus cereus (strain ZK / E33L).